The sequence spans 532 residues: Arginine--tRNA ligase (532 aa).

The short motif at Ala122–Ser132 is the 'HIGH' region element.

Belongs to the class-I aminoacyl-tRNA synthetase family. As to quaternary structure, monomer.

It is found in the cytoplasm. It carries out the reaction tRNA(Arg) + L-arginine + ATP = L-arginyl-tRNA(Arg) + AMP + diphosphate. The sequence is that of Arginine--tRNA ligase from Elusimicrobium minutum (strain Pei191).